The sequence spans 482 residues: Glutamyl-tRNA(Gln) amidotransferase subunit A (482 aa).

Catalysis depends on charge relay system residues lysine 80 and serine 159. The active-site Acyl-ester intermediate is serine 183.

It belongs to the amidase family. GatA subfamily. In terms of assembly, heterotrimer of A, B and C subunits.

The catalysed reaction is L-glutamyl-tRNA(Gln) + L-glutamine + ATP + H2O = L-glutaminyl-tRNA(Gln) + L-glutamate + ADP + phosphate + H(+). In terms of biological role, allows the formation of correctly charged Gln-tRNA(Gln) through the transamidation of misacylated Glu-tRNA(Gln) in organisms which lack glutaminyl-tRNA synthetase. The reaction takes place in the presence of glutamine and ATP through an activated gamma-phospho-Glu-tRNA(Gln). This is Glutamyl-tRNA(Gln) amidotransferase subunit A from Neorickettsia sennetsu (strain ATCC VR-367 / Miyayama) (Ehrlichia sennetsu).